Consider the following 1824-residue polypeptide: E3 ubiquitin-protein ligase UBR1 (1824 aa).

The UBR-type zinc finger occupies 107–178 (TVCGKVFKNG…KDQYCELHLA (72 aa)). Disordered stretches follow at residues 1006 to 1043 (KQAPSDGRAGPSCSQQGTGGKLSLSAEEQAREERENRA) and 1073 to 1093 (ADTENETRKESASTGPMDWED). The span at 1033–1043 (EQAREERENRA) shows a compositional bias: basic and acidic residues. The RING-type; atypical zinc finger occupies 1126–1220 (FKCILCFENC…VEFQCPYCRT (95 aa)).

This sequence belongs to the E3 ubiquitin-protein ligase UBR1-like family.

It catalyses the reaction S-ubiquitinyl-[E2 ubiquitin-conjugating enzyme]-L-cysteine + [acceptor protein]-L-lysine = [E2 ubiquitin-conjugating enzyme]-L-cysteine + N(6)-ubiquitinyl-[acceptor protein]-L-lysine.. It participates in protein modification; protein ubiquitination. Its function is as follows. E3 ubiquitin-protein ligase which is a component of the N-end rule pathway. Recognizes and binds to proteins bearing specific N-terminal residues that are destabilizing according to the N-end rule, leading to their ubiquitination and subsequent degradation. The polypeptide is E3 ubiquitin-protein ligase UBR1 (Drosophila melanogaster (Fruit fly)).